Here is a 326-residue protein sequence, read N- to C-terminus: Aspartate carbamoyltransferase catalytic subunit (326 aa).

2 residues coordinate carbamoyl phosphate: Arg58 and Thr59. Lys86 contacts L-aspartate. Arg108, His141, and Gln144 together coordinate carbamoyl phosphate. Positions 181 and 239 each coordinate L-aspartate. Carbamoyl phosphate-binding residues include Gly280 and Pro281.

It belongs to the aspartate/ornithine carbamoyltransferase superfamily. ATCase family. In terms of assembly, heterododecamer (2C3:3R2) of six catalytic PyrB chains organized as two trimers (C3), and six regulatory PyrI chains organized as three dimers (R2).

It carries out the reaction carbamoyl phosphate + L-aspartate = N-carbamoyl-L-aspartate + phosphate + H(+). It functions in the pathway pyrimidine metabolism; UMP biosynthesis via de novo pathway; (S)-dihydroorotate from bicarbonate: step 2/3. Its function is as follows. Catalyzes the condensation of carbamoyl phosphate and aspartate to form carbamoyl aspartate and inorganic phosphate, the committed step in the de novo pyrimidine nucleotide biosynthesis pathway. This Synechococcus sp. (strain JA-3-3Ab) (Cyanobacteria bacterium Yellowstone A-Prime) protein is Aspartate carbamoyltransferase catalytic subunit.